The primary structure comprises 1948 residues: MAPTWGPGMVSVVGPMGLLVVLLVGGCAAEEPPRFIKEPKDQIGVSGGVASFVCQATGDPKPRVTWNKKGKKVNSQRFETIEFDESAGAVLRIQPLRTPRDENVYECVAQNSVGEITVHAKLTVLREDQLPSGFPNIDMGPQLKVVERTRTATMLCAASGNPDPEITWFKDFLPVDPSASNGRIKQLRSETFESTPIRGALQIESSEETDQGKYECVATNSAGVRYSSPANLYVRELREVRRVAPRFSILPMSHEIMPGGNVNITCVAVGSPMPYVKWMQGAEDLTPEDDMPVGRNVLELTDVKDSANYTCVAMSSLGVIEAVAQITVKSLPKAPGTPMVTENTATSITITWDSGNPDPVSYYVIEYKSKSQDGPYQIKEDITTTRYSIGGLSPNSEYEIWVSAVNSIGQGPPSESVVTRTGEQAPASAPRNVQARMLSATTMIVQWEEPVEPNGLIRGYRVYYTMEPEHPVGNWQKHNVDDSLLTTVGSLLEDETYTVRVLAFTSVGDGPLSDPIQVKTQQGVPGQPMNLRAEARSETSITLSWSPPRQESIIKYELLFREGDHGREVGRTFDPTTSYVVEDLKPNTEYAFRLAARSPQGLGAFTPVVRQRTLQSKPSAPPQDVKCVSVRSTAILVSWRPPPPETHNGALVGYSVRYRPLGSEDPEPKEVNGIPPTTTQILLEALEKWTQYRITTVAHTEVGPGPESSPVVVRTDEDVPSAPPRKVEAEALNATAIRVLWRSPAPGRQHGQIRGYQVHYVRMEGAEARGPPRIKDVMLADAQWETDDTAEYEMVITNLQPETAYSITVAAYTMKGDGARSKPKVVVTKGAVLGRPTLSVQQTPEGSLLARWEPPAGTAEDQVLGYRLQFGREDSTPLATLEFPPSEDRYTASGVHKGATYVFRLAARSRGGLGEEAAEVLSIPEDTPRGHPQILEAAGNASAGTVLLRWLPPVPAERNGAIVKYTVAVREAGALGPARETELPAAAEPGAENALTLQGLKPDTAYDLQVRAHTRRGPGPFSPPVRYRTFLRDQVSPKNFKVKMIMKTSVLLSWEFPDNYNSPTPYKIQYNGLTLDVDGRTTKKLITHLKPHTFYNFVLTNRGSSLGGLQQTVTAWTAFNLLNGKPSVAPKPDADGFIMVYLPDGQSPVPVQSYFIVMVPLRKSRGGQFLTPLGSPEDMDLEELIQDISRLQRRSLRHSRQLEVPRPYIAARFSVLPPTFHPGDQKQYGGFDNRGLEPGHRYVLFVLAVLQKSEPTFAASPFSDPFQLDNPDPQPIVDGEEGLIWVIGPVLAVVFIICIVIAILLYKNKPDSKRKDSEPRTKCLLNNADLAPHHPKDPVEMRRINFQTPDSGLRSPLREPGFHFESMLSHPPIPIADMAEHTERLKANDSLKLSQEYESIDPGQQFTWEHSNLEVNKPKNRYANVIAYDHSRVILQPIEGIMGSDYINANYVDGYRCQNAYIATQGPLPETFGDFWRMVWEQRSATIVMMTRLEEKSRIKCDQYWPNRGTETYGFIQVTLLDTIELATFCVRTFSLHKNGSSEKREVRQFQFTAWPDHGVPEYPTPFLAFLRRVKTCNPPDAGPIVVHCSAGVGRTGCFIVIDAMLERIKPEKTVDVYGHVTLMRSQRNYMVQTEDQYSFIHEALLEAVGCGNTEVPARSLYAYIQKLAQVEPGEHVTGMELEFKRLANSKAHTSRFISANLPCNKFKNRLVNIMPYESTRVCLQPIRGVEGSDYINASFIDGYRQQKAYIATQGPLAETTEDFWRMLWENNSTIVVMLTKLREMGREKCHQYWPAERSARYQYFVVDPMAEYNMPQYILREFKVTDARDGQSRTVRQFQFTDWPEQGVPKSGEGFIDFIGQVHKTKEQFGQDGPISVHCSAGVGRTGVFITLSIVLERMRYEGVVDIFQTVKMLRTQRPAMVQTEDEYQFCYQAALEYLGSFDHYAT.

The signal sequence occupies residues 1–29 (MAPTWGPGMVSVVGPMGLLVVLLVGGCAA). Residues 30 to 1282 (EEPPRFIKEP…PQPIVDGEEG (1253 aa)) are Extracellular-facing. Ig-like C2-type domains lie at 33–123 (PRFI…AKLT), 135–233 (PNID…ANLY), and 245–327 (PRFS…AQIT). 2 cysteine pairs are disulfide-bonded: Cys54–Cys107 and Cys156–Cys216. The segment at 68–72 (KKGKK) is important for binding to glycosaminoglycan chains. Residues Asn263 and Asn308 are each glycosylated (N-linked (GlcNAc...) asparagine). The cysteines at positions 266 and 311 are disulfide-linked. Fibronectin type-III domains lie at 334-424 (APGT…TGEQ), 429-523 (APRN…TQQG), 527-616 (QPMN…TLQS), 621-718 (PPQD…TDED), 723-831 (PPRK…TKGA), 832-930 (VLGR…TPRG), 931-1033 (HPQI…FLRD), and 1036-1120 (SPKN…TAFN). Residues 700–724 (TEVGPGPESSPVVVRTDEDVPSAPP) are disordered. Residues 701 to 713 (EVGPGPESSPVVV) show a composition bias toward low complexity. An N-linked (GlcNAc...) asparagine glycan is attached at Asn733. Asn940 carries N-linked (GlcNAc...) asparagine glycosylation. The helical transmembrane segment at 1283–1303 (LIWVIGPVLAVVFIICIVIAI) threads the bilayer. Residues 1304 to 1948 (LLYKNKPDSK…YLGSFDHYAT (645 aa)) lie on the Cytoplasmic side of the membrane. Basic and acidic residues-rich tracts occupy residues 1311-1321 (DSKRKDSEPRT) and 1331-1340 (APHHPKDPVE). The disordered stretch occupies residues 1311 to 1340 (DSKRKDSEPRTKCLLNNADLAPHHPKDPVE). 2 consecutive Tyrosine-protein phosphatase domains span residues 1393-1648 (LSQE…LLEA) and 1680-1939 (MELE…ALEY). Substrate contacts are provided by residues Asp1557, 1589–1595 (CSAGVGR), and Gln1633. Cys1589 serves as the catalytic Phosphocysteine intermediate. The Phosphocysteine intermediate role is filled by Cys1880.

Belongs to the protein-tyrosine phosphatase family. Receptor class 2A subfamily. In terms of assembly, binding to large heparan sulfate proteoglycan structures promotes oligomerization. Binding to chondroitin sulfate proteoglycan does not lead to oligomerization. Interacts (via Ig-like domains) with NTRK3. Interacts (via Ig-like domains) with NTRK1, but does not form detectable complexes with NTRK2. Interacts with PPFIA1, PPFIA2 and PPFIA3. Post-translationally, a cleavage occurs, separating the extracellular domain from the transmembrane segment. This process called 'ectodomain shedding' is thought to be involved in receptor desensitization, signal transduction and/or membrane localization. As to expression, detected in peripheral blood plasmacytoid dendritic cells (at protein level). Detected in all tissues tested except for placenta and liver. Detected in peripheral blood plasmacytoid dendritic cells.

The protein localises to the cell membrane. It localises to the cell projection. It is found in the axon. The protein resides in the perikaryon. Its subcellular location is the cytoplasmic vesicle. The protein localises to the secretory vesicle. It localises to the synaptic vesicle membrane. It is found in the synapse. The protein resides in the synaptosome. Its subcellular location is the postsynaptic density. The protein localises to the neuron projection. It localises to the growth cone. The enzyme catalyses O-phospho-L-tyrosyl-[protein] + H2O = L-tyrosyl-[protein] + phosphate. Its function is as follows. Cell surface receptor that binds to glycosaminoglycans, including chondroitin sulfate proteoglycans and heparan sulfate proteoglycan. Binding to chondroitin sulfate and heparan sulfate proteoglycans has opposite effects on PTPRS oligomerization and regulation of neurite outgrowth. Contributes to the inhibition of neurite and axonal outgrowth by chondroitin sulfate proteoglycans, also after nerve transection. Plays a role in stimulating neurite outgrowth in response to the heparan sulfate proteoglycan GPC2. Required for normal brain development, especially for normal development of the pituitary gland and the olfactory bulb. Functions as a tyrosine phosphatase. Mediates dephosphorylation of NTRK1, NTRK2 and NTRK3. Plays a role in down-regulation of signaling cascades that lead to the activation of Akt and MAP kinases. Down-regulates TLR9-mediated activation of NF-kappa-B, as well as production of TNF, interferon alpha and interferon beta. This chain is Receptor-type tyrosine-protein phosphatase S (PTPRS), found in Homo sapiens (Human).